The sequence spans 412 residues: Probable tRNA pseudouridine synthase D (412 aa).

The active-site Nucleophile is the Asp-97. The region spanning Ala-167–Gln-370 is the TRUD domain.

The protein belongs to the pseudouridine synthase TruD family.

The enzyme catalyses uridine(13) in tRNA = pseudouridine(13) in tRNA. In terms of biological role, could be responsible for synthesis of pseudouridine from uracil-13 in transfer RNAs. The sequence is that of Probable tRNA pseudouridine synthase D from Pyrobaculum neutrophilum (strain DSM 2338 / JCM 9278 / NBRC 100436 / V24Sta) (Thermoproteus neutrophilus).